Here is a 260-residue protein sequence, read N- to C-terminus: 3beta-hydroxysteroid dehydrogenase 2 (260 aa).

NAD(+) contacts are provided by residues aspartate 43, 69-70, asparagine 96, tyrosine 163, and lysine 167; that span reads DV. The active-site Proton acceptor is tyrosine 163.

This sequence belongs to the short-chain dehydrogenases/reductases (SDR) family.

It catalyses the reaction 3-oxo-5beta-cholan-24-oate + NADH + H(+) = isolithocholate + NAD(+). The catalysed reaction is 12alpha-hydroxy-3-oxo-5beta-cholan-24-oate + NADH + H(+) = isodeoxycholate + NAD(+). The enzyme catalyses 12alpha-hydroxy-3-oxo-5beta-cholan-24-oate + NADPH + H(+) = isodeoxycholate + NADP(+). It carries out the reaction 7alpha,12alpha-dihydroxy-3-oxo-5beta-cholan-24-oate + NADH + H(+) = isocholate + NAD(+). It catalyses the reaction 3-oxochenodeoxycholate + NADH + H(+) = isochenodeoxycholate + NAD(+). In terms of biological role, involved in the modification of secondary bile acids into iso-bile acids (3beta-bile acids) via epimerization of the 3-OH group through a 3-oxo-intermediate. Catalyzes the reduction of 12-alpha-hydroxy-3-oxo-5-beta-cholan-24-oate (3-oxo-DCA) and 3-oxo-5-beta-cholan-24-oate (3-oxo-LCA) to yield isodeoxycholate (isoDCA) and isolithocholate (isoLCA), respectively. Is also able to catalyze the reduction of 3-dehydrocholate (3-oxo-CA or 7alpha,12alpha-dihydroxy-3-oxo-5beta-cholan-24-oate) and 7-alpha-hydroxy-3-oxo-5-beta-cholan-24-oate (3-oxo-CDCA), into isocholate (isoCA) and isochenodeoxycholate (isoCDCA), respectively. Accepts both NADH and NADPH as cosubstrates. The conversion of the abundant bile acid deoxycholate (DCA) into isoDCA by the gut bacterium E.lenta favors the growth of the keystone commensal genus Bacteroides, since isoDCA is less cytotoxic than its parent compound, DCA; iso-bile acids have thus a potential role in modulating gut community composition. This Eggerthella lenta (strain ATCC 25559 / DSM 2243 / CCUG 17323 / JCM 9979 / KCTC 3265 / NCTC 11813 / VPI 0255 / 1899 B) (Eubacterium lentum) protein is 3beta-hydroxysteroid dehydrogenase 2.